A 555-amino-acid chain; its full sequence is Protein peste (555 aa).

Residues 1 to 7 (MTSRTRH) are Cytoplasmic-facing. The chain crosses the membrane as a helical span at residues 8-28 (CARLGIVLLGICCIASGIYLF). Over 29 to 434 (RNWIDMFTRM…VRVSEEIAAD (406 aa)) the chain is Extracellular. Asn-70, Asn-110, Asn-129, Asn-213, Asn-242, Asn-312, and Asn-342 each carry an N-linked (GlcNAc...) asparagine glycan. Residues 435 to 455 (IALVPLIVLLGQIVTGILLAG) form a helical membrane-spanning segment. Residues 456–555 (GLICTCWYPT…SEDSPDVVVR (100 aa)) are Cytoplasmic-facing.

This sequence belongs to the CD36 family.

It localises to the cell membrane. (Microbial infection) Plays a role in mycobacterial infection. Mediates infection by M.fortuitum and uptake of M.smegmatis. This is Protein peste from Drosophila melanogaster (Fruit fly).